The following is a 394-amino-acid chain: L-lactate 2-monooxygenase (394 aa).

The FMN hydroxy acid dehydrogenase domain maps to 19 to 394 (VAPTLPMSYA…LTIDALRPTR (376 aa)). An a 2-oxocarboxylate-binding site is contributed by Y45. FMN-binding positions include 98-100 (PIG), S129, and Q151. Y153 provides a ligand contact to a 2-oxocarboxylate. T179 contacts FMN. Residue R188 participates in a 2-oxocarboxylate binding. K267 is an FMN binding site. H291 functions as the Proton acceptor in the catalytic mechanism. A 2-oxocarboxylate is bound at residue R294. FMN contacts are provided by residues 321 to 325 (DSGIR) and R345.

Belongs to the FMN-dependent alpha-hydroxy acid dehydrogenase family. As to quaternary structure, homotetramer. The cofactor is FMN.

The catalysed reaction is (S)-lactate + O2 = acetate + CO2 + H2O. In terms of biological role, catalyzes the oxidative decarboxylation of (S)-lactate (L-lactate) to acetate and carbon dioxide. Its physiological role remains unknown. The polypeptide is L-lactate 2-monooxygenase (Mycolicibacterium smegmatis (Mycobacterium smegmatis)).